The following is a 766-amino-acid chain: Serine/threonine-protein kinase tousled-like 1 (766 aa).

Residues 1–198 (MSVQSSSGSL…PSPTALAFGD (198 aa)) form a disordered region. Residues 20–33 (STSPTPGSAAAARS) are compositionally biased toward low complexity. Threonine 38 is subject to Phosphothreonine. The segment covering 43 to 64 (RPREGAMDELHSLDPRRQELLE) has biased composition (basic and acidic residues). Serine 54, serine 77, and serine 80 each carry phosphoserine. A compositionally biased stretch (low complexity) spans 68-85 (TGVATGSTGSTGSCSVGA). Over residues 87–103 (ASTNNESSNHSFGSLGS) the composition is skewed to polar residues. Basic and acidic residues predominate over residues 105-121 (SDKESETPEKKQSESSR). 4 positions are modified to phosphoserine: serine 134, serine 159, serine 174, and serine 176. Residues 170–192 (SPQNSHSHSTPSSSVRPNSPSPT) show a composition bias toward low complexity. A coiled-coil region spans residues 229-280 (NQDLEKKEGRIDDLLRANCDLRRQIDDQQKLLEKYKERLNKCISMSKKLLIE). Positions 344–381 (KLLGKRKPPTANNSQAPATNSEAKQRKTKAVNGAENDP) are disordered. Residues 353 to 365 (TANNSQAPATNSE) show a composition bias toward polar residues. Positions 397–445 (HEQEEIFKLRLGHLKKEEAEIQAELERLERVRNLHIRELKRINNEDNSQ) form a coiled coil. A Protein kinase domain is found at 456-734 (YLLLHLLGRG…VHQLANDPYL (279 aa)). ATP contacts are provided by residues 462 to 470 (LGRGGFSEV) and lysine 485. Aspartate 586 acts as the Proton acceptor in catalysis. The residue at position 743 (serine 743) is a Phosphoserine. Residues 745-766 (GNLHMSGLTATPTPPSSSIITY) form a disordered region.

This sequence belongs to the protein kinase superfamily. Ser/Thr protein kinase family. As to quaternary structure, heterodimer with TLK2. It depends on Mg(2+) as a cofactor. In terms of tissue distribution, ubiquitously expressed in all tissues examined.

It localises to the nucleus. It carries out the reaction L-seryl-[protein] + ATP = O-phospho-L-seryl-[protein] + ADP + H(+). The catalysed reaction is L-threonyl-[protein] + ATP = O-phospho-L-threonyl-[protein] + ADP + H(+). With respect to regulation, cell-cycle regulated, maximal activity in S-phase. Inactivated by phosphorylation at Ser-743, potentially by CHEK1. Functionally, rapidly and transiently inhibited by phosphorylation following the generation of DNA double-stranded breaks during S-phase. This is cell cycle checkpoint and ATM-pathway dependent and appears to regulate processes involved in chromatin assembly. Isoform 3 protects the cells from the ionizing radiation by facilitating the repair of DSBs. In vitro, phosphorylates histone H3 at 'Ser-10'. This chain is Serine/threonine-protein kinase tousled-like 1 (Tlk1), found in Mus musculus (Mouse).